The following is a 499-amino-acid chain: Ribose import ATP-binding protein RbsA (499 aa).

ABC transporter domains lie at 3 to 240 (VEMS…VGRE) and 250 to 494 (LEPG…TGGD). ATP is bound at residue 35 to 42 (GENGAGKS).

Belongs to the ABC transporter superfamily. Ribose importer (TC 3.A.1.2.1) family. In terms of assembly, the complex is composed of an ATP-binding protein (RbsA), two transmembrane proteins (RbsC) and a solute-binding protein (RbsB).

It localises to the cell membrane. It catalyses the reaction D-ribose(out) + ATP + H2O = D-ribose(in) + ADP + phosphate + H(+). Its function is as follows. Part of the ABC transporter complex RbsABC involved in ribose import. Responsible for energy coupling to the transport system. This Shouchella clausii (strain KSM-K16) (Alkalihalobacillus clausii) protein is Ribose import ATP-binding protein RbsA.